Here is a 287-residue protein sequence, read N- to C-terminus: 4-diphosphocytidyl-2-C-methyl-D-erythritol kinase (287 aa).

Residue Lys11 is part of the active site. 93 to 103 (PFGAGLGGGSS) lines the ATP pocket. The active site involves Asp135.

Belongs to the GHMP kinase family. IspE subfamily.

It carries out the reaction 4-CDP-2-C-methyl-D-erythritol + ATP = 4-CDP-2-C-methyl-D-erythritol 2-phosphate + ADP + H(+). The protein operates within isoprenoid biosynthesis; isopentenyl diphosphate biosynthesis via DXP pathway; isopentenyl diphosphate from 1-deoxy-D-xylulose 5-phosphate: step 3/6. Its function is as follows. Catalyzes the phosphorylation of the position 2 hydroxy group of 4-diphosphocytidyl-2C-methyl-D-erythritol. In Pelodictyon phaeoclathratiforme (strain DSM 5477 / BU-1), this protein is 4-diphosphocytidyl-2-C-methyl-D-erythritol kinase.